The sequence spans 184 residues: Regulatory protein RecX (184 aa).

The disordered stretch occupies residues 1–21 (MTLFPLPSTSDPAEADESTKR).

The protein belongs to the RecX family.

The protein resides in the cytoplasm. In terms of biological role, modulates RecA activity. The chain is Regulatory protein RecX from Mycolicibacterium vanbaalenii (strain DSM 7251 / JCM 13017 / BCRC 16820 / KCTC 9966 / NRRL B-24157 / PYR-1) (Mycobacterium vanbaalenii).